A 781-amino-acid polypeptide reads, in one-letter code: Arf-GAP with coiled-coil, ANK repeat and PH domain-containing protein 2 (781 aa).

Positions 1–226 (MKVTVDFEEC…MKDLGAQLDQ (226 aa)) constitute a BAR domain. One can recognise a PH domain in the interval 266 to 361 (GIVMEGYLFK…WIKAVQTSIA (96 aa)). A compositionally biased stretch (basic and acidic residues) spans 365–378 (REKGDESEKQEKKS). The segment at 365–390 (REKGDESEKQEKKSSPSTGSLESGSE) is disordered. The segment covering 379–388 (SPSTGSLESG) has biased composition (low complexity). The 123-residue stretch at 399-521 (ESALQRVQCI…KFVEKQPAAA (123 aa)) folds into the Arf-GAP domain. A C4-type zinc finger spans residues 414–437 (CCDCGLADPRWASINLGITLCIEC). The disordered stretch occupies residues 520–576 (AAVSPLESRTKVLPQSQEEKRHSAPEKSFLAIEQGAASPRVRSSDSGIQQSVDDSRE). ANK repeat units follow at residues 642-671 (NKAT…NVNI), 675-704 (KGRG…NQHA), and 708-737 (DGKD…NEEM).

The protein localises to the endosome membrane. It is found in the cell membrane. GAP activity stimulated by phosphatidylinositol 4,5-bisphosphate (PIP2) and phosphatidic acid. GTPase-activating protein (GAP) for ADP ribosylation factor 6 (ARF6). In Gallus gallus (Chicken), this protein is Arf-GAP with coiled-coil, ANK repeat and PH domain-containing protein 2 (ACAP2).